Here is a 200-residue protein sequence, read N- to C-terminus: MAAQVDAVILAGGMARRMGGNDKGLVELLNRPMIEHAIERIKPQVKEILINANRNQNRYSEFGFKVFSDQDSGYLGPLAGMITAMSNTDAEYLLVVPCDCPLLPTDLVARMLAKLTAEDAELAVASDGKREQPVVMLLKPSLRESMKAFLDAGERKIDFWYAKHHYVVAEFSDQPNAFVNVNTPEQKQQLGEAIANEENH.

Residues 10–12 (LAG), Lys-23, Asn-51, Asp-69, and Asp-99 each bind GTP. Asp-99 lines the Mg(2+) pocket.

Belongs to the MobA family. As to quaternary structure, monomer. Mg(2+) serves as cofactor.

It localises to the cytoplasm. The catalysed reaction is Mo-molybdopterin + GTP + H(+) = Mo-molybdopterin guanine dinucleotide + diphosphate. Its function is as follows. Transfers a GMP moiety from GTP to Mo-molybdopterin (Mo-MPT) cofactor (Moco or molybdenum cofactor) to form Mo-molybdopterin guanine dinucleotide (Mo-MGD) cofactor. The polypeptide is Molybdenum cofactor guanylyltransferase (Shewanella pealeana (strain ATCC 700345 / ANG-SQ1)).